We begin with the raw amino-acid sequence, 364 residues long: Metalloendoproteinase 1-MMP (364 aa).

The signal sequence occupies residues 1–28; it reads MSRNLIYRRNRALCFVLILFCFPYRFGA. The propeptide at 29-149 is activation peptide; that stretch reads RNTPEAEQST…NNDFLHTTAH (121 aa). An N-linked (GlcNAc...) asparagine glycan is attached at Asn49. The short motif at 128–135 is the Cysteine switch element; that stretch reads PRCGVSDT. Cys130 contributes to the Zn(2+) binding site. Asp211 contributes to the Ca(2+) binding site. The Zn(2+) site is built by His221 and Asp223. Residues Asp228 and Gly229 each coordinate Ca(2+). Residue His236 participates in Zn(2+) binding. A Ca(2+)-binding site is contributed by Gly243. Zn(2+) is bound at residue His246. Ca(2+)-binding residues include Asp248 and Glu251. Residue His275 participates in Zn(2+) binding. Glu276 is an active-site residue. Residues His279 and His285 each contribute to the Zn(2+) site. Asn338 carries an N-linked (GlcNAc...) asparagine glycan. Gly339 is lipidated: GPI-anchor amidated glycine. The propeptide at 340 to 364 is removed in mature form; that stretch reads TVSHRFLSGNFIGYVLLVVGLILFL.

Belongs to the peptidase M10A family. Matrix metalloproteinases (MMPs) subfamily. Ca(2+) is required as a cofactor. Requires Zn(2+) as cofactor. Mostly expressed in flowers, roots and stems, and, to a lower extent, in leaves.

Its subcellular location is the cell membrane. Inhibited by human TIMP-1 and TIMP-2 and by the peptide hydroxamate inhibitor (BB-94). Repressed by acetohydroxamic acid (AHA). In terms of biological role, matrix metalloproteinases (MMPs) or matrixins may play a role in the degradation and remodeling of the extracellular matrix (ECM) during development or in response to stresses. Can cleave myelin basic protein as well as fluorigenic peptide substrates, McaPLANvaDpaAR-NH(2) and McaPChaGNvaHADpa-NH(2) 4-fold more efficiently than McaPLGLDpaAR-NH(2) (QF24). Active on myelin basic protein (MBP) and, to some extent, on McaPLGLDpaAR-NH(2) (QF24) and beta-casein. This chain is Metalloendoproteinase 1-MMP, found in Arabidopsis thaliana (Mouse-ear cress).